The following is a 689-amino-acid chain: Glycine--tRNA ligase beta subunit (689 aa).

The protein belongs to the class-II aminoacyl-tRNA synthetase family. In terms of assembly, tetramer of two alpha and two beta subunits.

It is found in the cytoplasm. The enzyme catalyses tRNA(Gly) + glycine + ATP = glycyl-tRNA(Gly) + AMP + diphosphate. This chain is Glycine--tRNA ligase beta subunit, found in Acinetobacter baumannii (strain ACICU).